The sequence spans 491 residues: uncharacterized protein (491 aa).

ATP is bound at residue 266–273 (GIQGTGKS).

The protein belongs to the AAA ATPase family. Highly divergent.

The protein localises to the plastid. Its subcellular location is the chloroplast. This is an uncharacterized protein from Porphyra purpurea (Red seaweed).